We begin with the raw amino-acid sequence, 131 residues long: Transcription antitermination protein NusB (131 aa).

The protein belongs to the NusB family.

In terms of biological role, involved in transcription antitermination. Required for transcription of ribosomal RNA (rRNA) genes. Binds specifically to the boxA antiterminator sequence of the ribosomal RNA (rrn) operons. This Campylobacter curvus (strain 525.92) protein is Transcription antitermination protein NusB.